Consider the following 255-residue polypeptide: NAD kinase (255 aa).

Asp44 functions as the Proton acceptor in the catalytic mechanism. Residues 44–45, His49, 114–115, Asp144, Ala152, 155–160, and Gln216 contribute to the NAD(+) site; these read DG, NE, and SAYNLS.

This sequence belongs to the NAD kinase family. The cofactor is a divalent metal cation.

It is found in the cytoplasm. It catalyses the reaction NAD(+) + ATP = ADP + NADP(+) + H(+). Involved in the regulation of the intracellular balance of NAD and NADP, and is a key enzyme in the biosynthesis of NADP. Catalyzes specifically the phosphorylation on 2'-hydroxyl of the adenosine moiety of NAD to yield NADP. The polypeptide is NAD kinase (Rickettsia akari (strain Hartford)).